The sequence spans 2049 residues: Non-reducing polyketide synthase hmp3 (2049 aa).

The N-terminal acylcarrier protein transacylase (SAT) domain stretch occupies residues 9–246; it reads LYFGDQTDSW…NELSIHALQH (238 aa). The region spanning 365–793 is the Ketosynthase family 3 (KS3) domain; the sequence is PGRIAIVGMA…GGNASLILED (429 aa). Residues C538, H673, and H712 each act as for beta-ketoacyl synthase activity in the active site. The interval 887–1146 is malonyl-CoA:ACP transacylase (MAT) domain; the sequence is VFVFTGQGSH…VDFVGALGAL (260 aa). S978 (for acyl/malonyl transferase activity) is an active-site residue. The interval 1265–1404 is N-terminal hotdog fold; that stretch reads QQIVEESSSP…AQTLQTSWNR (140 aa). Residues 1265–1573 enclose the PKS/mFAS DH domain; that stretch reads QQIVEESSSP…FHEVSNNVLD (309 aa). The segment at 1269 to 1572 is product template (PT) domain; it reads EESSSPSLHV…SFHEVSNNVL (304 aa). The tract at residues 1425 to 1573 is C-terminal hotdog fold; the sequence is GHRMLPSILY…FHEVSNNVLD (149 aa). The Carrier domain occupies 1626-1704; the sequence is SSESELFHTI…DLRNEFARSS (79 aa). Residue S1663 is modified to O-(pantetheine 4'-phosphoryl)serine. Residues 1700 to 1747 form a disordered region; that stretch reads FARSSTSTPPSKTFSEFSIVDATPESTRSSSRAPSEKKEPAPASEKSE. Over residues 1703–1717 the composition is skewed to low complexity; sequence SSTSTPPSKTFSEFS. Residues 1723–1732 show a composition bias toward polar residues; sequence PESTRSSSRA. Basic and acidic residues predominate over residues 1733-1747; sequence PSEKKEPAPASEKSE. The thioesterase (TE) domain stretch occupies residues 1761–1951; sequence SPLPSARITL…KRTAIIWAKK (191 aa).

It participates in secondary metabolite biosynthesis. In terms of biological role, non-reducing polyketide synthase; part of the gene cluster that mediates the biosynthesis of hypothemycin, a resorcylic acid lactone (RAL) that irreversibly inhibits a subset of protein kinases with a conserved cysteine in the ATP binding site such as human ERK2. The first step is performed by both PKSs hmp3 and hmp8 and leads to the production of 7',8'-dehydrozearalenol (DHZ). The highly reducing PKS hpm8 synthesizes the reduced hexaketide (7S,11S,2E,8E)-7,11-dihydroxy-dodeca-2,8-dienoate, which is transferred downstream to the non-reducing PKS hpm3. Hpm3 then extends the reduced hexaketide to a nonaketide, after which regioselective cyclization and macrolactonization affords DHZ. The next step is the conversion of DHZ into aigialomycin C and is performed by the O-methyltransferase hmp5, the FAD-binding monooxygenase hmp7, and the cytochrome P450 monooxygenase hmp1. The wide substrate tolerance of the hmp5 and hmp7 implies that the reactions from DHZ to aigialomycin C can occur in any order. The steps from aigialomycin C to hypothemycin are less well established. The FAD-linked oxidoreductase hmp9 presumably catalyzes oxidation of the C-6' hydroxyl to a ketone. The timing of this oxidation is important, since the resulting enone functional group is a Michael acceptor that can react spontaneously with glutathione, an abundant metabolite in fungal cells. The glutathione S-transferase hmp2 catalyzes cis-trans isomerization of the 7',8' double bond with equilibrium favoring the trans isomer. The hpm6-encoded transporter might preferentially pump hypothemycin out of the cell relative to the trans isomer aigialomycin A. The cis-to-trans isomerization may be coupled with C-4' hydroxylation, since all known hypothemycin analogs containing the enone functional group also have hydroxyl groups at both C-4' and C-5'. The sequence is that of Non-reducing polyketide synthase hmp3 from Hypomyces subiculosus (Nectria subiculosa).